The sequence spans 93 residues: M-zodatoxin-Lt5a (93 aa).

An N-terminal signal peptide occupies residues 1 to 22 (MKYCVVILALLVALVCITESRS). Positions 23-64 (TETGYAVAETLEDNDLDELQAYLEEIAEASEMEDFSNIEEAR) are excised as a propeptide. Positions 61 to 64 (EEAR) match the Processing quadruplet motif motif. Leu-92 bears the Leucine amide mark.

Cleavage of the propeptide depends on the processing quadruplet motif (XXXR, with at least one of X being E). As to expression, expressed by the venom gland.

It localises to the secreted. Has antimicrobial activity against. Gram-positive bacteria (A.globiformis VKM Ac-1112 (MIC=1.1 uM), and B.subtilis VKM B-501 (MIC=0.6 uM)), Gram-negative bacteria (E.coli DH5-alpha (MIC=0.6 uM), E.coli MH1 (MIC=0.6 uM), and P.aeruginosa PAO1 (MIC=18 uM)), and yeasts (P.pastoris GS115 (MIC&gt;37 uM), and S.cerevisiae Y190 (MIC&gt;37 uM)). Also has a moderate hemolytic activity against rabbit erythrocytes. Causes paralysis, but is not lethal when injected into insect (M.domestica) larvae. The polypeptide is M-zodatoxin-Lt5a (Lachesana tarabaevi (Spider)).